A 622-amino-acid chain; its full sequence is Deoxynucleoside triphosphate triphosphohydrolase SAMHD1 (622 aa).

The region spanning 26–89 (WDVEDTVAYL…LHCLQKLSQI (64 aa)) is the SAM domain. GTP contacts are provided by Lys-95 and Val-96. Position 98 (Asn-98) interacts with dGTP. Residues Asp-116, Gln-121, and Arg-124 each coordinate GTP. 4 residues coordinate dGTP: Gln-128, Leu-129, Val-135, and Arg-143. Gln-128 contacts dATP. A dCTP-binding site is contributed by Gln-128. Gln-128 is a binding site for dTTP. Arg-143 serves as a coordination point for dATP. Arg-143 is a binding site for dCTP. Residue Arg-143 coordinates dTTP. The HD domain occupies 143–296 (RFEHSIGVGY…GIDVDKWDYF (154 aa)). Residues His-146, His-185, and Asp-186 each contribute to the Mn(2+) site. Residues His-189 and His-194 each contribute to the dATP site. DCTP contacts are provided by His-189 and His-194. The dTTP site is built by His-189 and His-194. His-212 is a catalytic residue. Asp-291 provides a ligand contact to Mn(2+). DGTP is bound by residues Lys-292, Tyr-295, Asp-299, Arg-313, Arg-332, Lys-334, Asn-338, Arg-346, Tyr-354, Gln-355, His-356, and Lys-357. Residues Lys-292, Tyr-295, and Asp-299 each contribute to the dATP site. DCTP is bound by residues Lys-292, Tyr-295, and Asp-299. DTTP-binding residues include Lys-292, Tyr-295, and Asp-299. Residue Arg-346 participates in dATP binding. DCTP is bound at residue Arg-346. Gln-355 is a dATP binding site. Gln-355 lines the dCTP pocket. Gln-355 contributes to the dTTP binding site. Arg-431, Lys-435, and Lys-502 together coordinate GTP. Residue Lys-502 participates in dGTP binding. The segment at 571 to 622 (TPLKQDWHAREDEDEEEEEKHRQNQTLPHHTPQRTGRNVKVDLFQARGETKL) is disordered. Residues 594–606 (NQTLPHHTPQRTG) show a composition bias toward polar residues.

It belongs to the SAMHD1 family. Homodimer; in absence of GTP and dNTP. Homotetramer; in GTP- and dNTP-bound form. Interacts with rbbp8/CtIP. Zn(2+) serves as cofactor.

The protein localises to the nucleus. The protein resides in the chromosome. It carries out the reaction a 2'-deoxyribonucleoside 5'-triphosphate + H2O = a 2'-deoxyribonucleoside + triphosphate + H(+). It catalyses the reaction dATP + H2O = 2'-deoxyadenosine + triphosphate + H(+). The enzyme catalyses dCTP + H2O = 2'-deoxycytidine + triphosphate + H(+). The catalysed reaction is dGTP + H2O = 2'-deoxyguanosine + triphosphate + H(+). It carries out the reaction dTTP + H2O = thymidine + triphosphate + H(+). Its activity is regulated as follows. Allosterically activated and regulated via the combined actions of GTP and dNTPs (dATP, dGTP, dTTP and dCTP): Allosteric site 1 binds GTP, while allosteric site 2 binds dNTP. Allosteric activation promotes the formation of highly active homotetramers. Functionally, protein that acts both as a host restriction factor involved in defense response to virus and as a regulator of DNA end resection at stalled replication forks. Has deoxynucleoside triphosphate (dNTPase) activity, which is required to restrict infection by viruses: dNTPase activity reduces cellular dNTP levels to levels too low for retroviral reverse transcription to occur, blocking early-stage virus replication in dendritic and other myeloid cells. Functions during S phase at stalled DNA replication forks to promote the resection of gapped or reversed forks: acts by stimulating the exonuclease activity of MRE11, activating the ATR-CHK1 pathway and allowing the forks to restart replication. Its ability to promote degradation of nascent DNA at stalled replication forks is required to prevent induction of type I interferons, thereby preventing chronic inflammation. Ability to promote DNA end resection at stalled replication forks is independent of dNTPase activity. In Danio rerio (Zebrafish), this protein is Deoxynucleoside triphosphate triphosphohydrolase SAMHD1.